The following is a 1332-amino-acid chain: DEMETER-like protein 2 (1332 aa).

Positions 1-23 (MEVEGEVREKEARVKGRQPETEV) are enriched in basic and acidic residues. Disordered regions lie at residues 1–29 (MEVE…GLPQ), 137–242 (VSTS…TSEE), and 280–317 (VEGS…KKTD). Over residues 137 to 153 (VSTSTQRTEPESPQITL) the composition is skewed to polar residues. Over residues 223 to 236 (SKAGIKKSSIAATA) the composition is skewed to low complexity. The segment covering 301 to 312 (PKGRRGQRRSNG) has biased composition (basic residues). The segment at 497–595 (KVQLDPETSR…AYMDLAAEFP (99 aa)) is DEMETER. A compositionally biased stretch (polar residues) spans 739–753 (HQQDPESTIQTQDQQ). A disordered region spans residues 739–810 (HQQDPESTIQ…GGRKRERTER (72 aa)). Positions 763 to 777 (KNRKKPTTSKPKKKS) are enriched in basic residues. The span at 787-810 (KSVDWDSLRKEAESGGRKRERTER) shows a compositional bias: basic and acidic residues. C970, C977, C980, and C986 together coordinate [4Fe-4S] cluster.

Belongs to the DNA glycosylase family. DEMETER subfamily. Requires [4Fe-4S] cluster as cofactor.

Its subcellular location is the nucleus. In terms of biological role, potential transcriptional activator that may act by nicking the target promoter. Catalyzes the release of 5-methylcytosine (5-meC) from DNA by a glycosylase/lyase mechanism. In Arabidopsis thaliana (Mouse-ear cress), this protein is DEMETER-like protein 2 (DML2).